The chain runs to 185 residues: Ribosome-recycling factor (185 aa).

The protein belongs to the RRF family.

It localises to the cytoplasm. Its function is as follows. Responsible for the release of ribosomes from messenger RNA at the termination of protein biosynthesis. May increase the efficiency of translation by recycling ribosomes from one round of translation to another. The chain is Ribosome-recycling factor from Vibrio campbellii (strain ATCC BAA-1116).